Reading from the N-terminus, the 207-residue chain is NADH-ubiquinone oxidoreductase chain 6 (207 aa).

5 helical membrane-spanning segments follow: residues 1–21 (MDFL…LVIQ), 28–48 (SVLF…LLGL), 50–70 (FFAL…FLFV), 88–108 (YLPV…ILID), and 158–178 (FYFF…AIVL).

It belongs to the complex I subunit 6 family.

It localises to the mitochondrion membrane. It catalyses the reaction a ubiquinone + NADH + 5 H(+)(in) = a ubiquinol + NAD(+) + 4 H(+)(out). Its function is as follows. Core subunit of the mitochondrial membrane respiratory chain NADH dehydrogenase (Complex I) that is believed to belong to the minimal assembly required for catalysis. Complex I functions in the transfer of electrons from NADH to the respiratory chain. The immediate electron acceptor for the enzyme is believed to be ubiquinone. This chain is NADH-ubiquinone oxidoreductase chain 6 (ND6), found in Prototheca wickerhamii.